The chain runs to 231 residues: uncharacterized protein (231 aa).

The region spanning 3–119 is the RCK N-terminal domain; that stretch reads RADFCIIGLG…RTMGIREALI (117 aa). Residues 134-221 enclose the RCK C-terminal domain; the sequence is HGMETEIINL…VNQYLRYINP (88 aa).

This is an uncharacterized protein from Mycoplasma pneumoniae (strain ATCC 29342 / M129 / Subtype 1) (Mycoplasmoides pneumoniae).